The primary structure comprises 92 residues: Long neurotoxin 469 (92 aa).

Residues 1 to 21 form the signal peptide; the sequence is MKTLLLTLVVVTIVCLDLGDS. Cystine bridges form between cysteine 24–cysteine 41, cysteine 34–cysteine 62, cysteine 47–cysteine 51, cysteine 66–cysteine 77, and cysteine 78–cysteine 83.

This sequence belongs to the three-finger toxin family. Long-chain subfamily. Type II alpha-neurotoxin sub-subfamily. As to expression, expressed by the venom gland.

It is found in the secreted. Binds with high affinity to muscular (alpha-1/CHRNA1) and neuronal (alpha-7/CHRNA7) nicotinic acetylcholine receptor (nAChR) and inhibits acetylcholine from binding to the receptor, thereby impairing neuromuscular and neuronal transmission. The polypeptide is Long neurotoxin 469 (Drysdalia coronoides (White-lipped snake)).